The sequence spans 133 residues: Ubiquitin-like FUBI-ribosomal protein eS30 fusion protein (133 aa).

The 74-residue stretch at 1–74 (MQLFVRAQEL…LEVAGRMLGG (74 aa)) folds into the Ubiquitin-like domain. N6-succinyllysine is present on Lys125.

This sequence in the N-terminal section; belongs to the ubiquitin family. The protein in the C-terminal section; belongs to the eukaryotic ribosomal protein eS30 family. Component of the 40S subunit of the ribosome. In terms of processing, FUBI is cleaved from ribosomal protein S30 by the deubiquitinase USP36 before the assembly of ribosomal protein S30 into pre-40S ribosomal particles. FUBI removal from ribosomal protein S30 is a crucial event for the final maturation of pre-40S particles.

The protein localises to the cytoplasm. It localises to the nucleus. Its function is as follows. May have pro-apoptotic activity. Component of the 40S subunit of the ribosome. Contributes to the assembly and function of 40S ribosomal subunits. In Oryctolagus cuniculus (Rabbit), this protein is Ubiquitin-like FUBI-ribosomal protein eS30 fusion protein (FAU).